Reading from the N-terminus, the 437-residue chain is Trigger factor (437 aa).

Residues 163–248 (SDRVIIDFEG…LNNVSEATLP (86 aa)) enclose the PPIase FKBP-type domain.

The protein belongs to the FKBP-type PPIase family. Tig subfamily.

It is found in the cytoplasm. It catalyses the reaction [protein]-peptidylproline (omega=180) = [protein]-peptidylproline (omega=0). Involved in protein export. Acts as a chaperone by maintaining the newly synthesized protein in an open conformation. Functions as a peptidyl-prolyl cis-trans isomerase. The protein is Trigger factor of Neisseria meningitidis serogroup C / serotype 2a (strain ATCC 700532 / DSM 15464 / FAM18).